The sequence spans 371 residues: MMLQLEQIRRDLHQIPELGFQEFKTQAYLLERINEIATENVEIKKWSTGILVYVHGKSPARKIGFRADIDGLPILEQTNLPYASLHEGRMHACGHDLHMTIALGALEKLIQDPINDDVIFVFQPAEEGPGGAKPMLESEEFQQWKPDMMFALHIAPELPVGTVSSKAGLLFANTSELFIDFEGVGGHAAYPHLTKDMTVAASNFVVQLQQIVSRGLNPLDGSVITIGKMESGYVQNAIAETARLEGTIRSTDADAIDMIKSKLNRLMKGFEISYDCTIKVDYGANYYQVVNDATYVQQFENVINQTQTITYQQADAAMTGEDFGDMLKEIPGFMFWLGVDSSYGLHNARLNPKEEAIDVGVNAVISMITSF.

Residue Asp68 is part of the active site. Residue Glu127 is the Proton acceptor of the active site.

The protein belongs to the peptidase M20A family. N-acetyldiaminopimelate deacetylase subfamily.

It carries out the reaction N-acetyl-(2S,6S)-2,6-diaminopimelate + H2O = (2S,6S)-2,6-diaminopimelate + acetate. It functions in the pathway amino-acid biosynthesis; L-lysine biosynthesis via DAP pathway; LL-2,6-diaminopimelate from (S)-tetrahydrodipicolinate (acetylase route): step 3/3. Functionally, catalyzes the conversion of N-acetyl-diaminopimelate to diaminopimelate and acetate. The chain is N-acetyldiaminopimelate deacetylase from Oceanobacillus iheyensis (strain DSM 14371 / CIP 107618 / JCM 11309 / KCTC 3954 / HTE831).